The sequence spans 44 residues: Mu-conotoxin-like Cal 12.1.2h (44 aa).

4 cysteine pairs are disulfide-bonded: cysteine 3/cysteine 16, cysteine 11/cysteine 28, cysteine 18/cysteine 33, and cysteine 27/cysteine 38. Residue tryptophan 17 is modified to 6'-bromotryptophan. Proline 23 is modified (4-hydroxyproline). Tryptophan 36 and tryptophan 37 each carry 6'-bromotryptophan. Position 39 is a 4-hydroxyproline (proline 39). Tryptophan 43 carries the 6'-bromotryptophan modification.

Expressed by the venom duct.

Its subcellular location is the secreted. In terms of biological role, mu-conotoxins block voltage-gated sodium channels. This toxin reversibly blocks voltage-gated sodium channel in cephalopods, with no alteration in the voltage dependence of sodium conductance or on the kinetics of inactivation. In Californiconus californicus (California cone), this protein is Mu-conotoxin-like Cal 12.1.2h.